The sequence spans 304 residues: Methionyl-tRNA formyltransferase (304 aa).

Residue 111 to 114 coordinates (6S)-5,6,7,8-tetrahydrofolate; sequence SLLP.

Belongs to the Fmt family.

The enzyme catalyses L-methionyl-tRNA(fMet) + (6R)-10-formyltetrahydrofolate = N-formyl-L-methionyl-tRNA(fMet) + (6S)-5,6,7,8-tetrahydrofolate + H(+). Functionally, attaches a formyl group to the free amino group of methionyl-tRNA(fMet). The formyl group appears to play a dual role in the initiator identity of N-formylmethionyl-tRNA by promoting its recognition by IF2 and preventing the misappropriation of this tRNA by the elongation apparatus. The polypeptide is Methionyl-tRNA formyltransferase (Campylobacter fetus subsp. fetus (strain 82-40)).